Reading from the N-terminus, the 389-residue chain is Mating-type protein MAT-1 (389 aa).

The alpha box DNA-binding region spans 70 to 127; sequence KAKKALNAFVGFRCYYISIPHFKSWPMKKLSNLIGLLWETDPNKSLWSLMTKAWSAIR.

This sequence belongs to the MATALPHA1 family.

It is found in the nucleus. Its function is as follows. Mating type proteins are sequence specific DNA-binding proteins that act as master switches in fungal differentiation by controlling gene expression in a cell type-specific fashion. Transcriptional activator that induces the transcription of alpha-specific genes. This chain is Mating-type protein MAT-1 (MAT1), found in Alternaria alternata (Alternaria rot fungus).